The sequence spans 95 residues: Aspartyl/glutamyl-tRNA(Asn/Gln) amidotransferase subunit C (95 aa).

This sequence belongs to the GatC family. As to quaternary structure, heterotrimer of A, B and C subunits.

It catalyses the reaction L-glutamyl-tRNA(Gln) + L-glutamine + ATP + H2O = L-glutaminyl-tRNA(Gln) + L-glutamate + ADP + phosphate + H(+). It carries out the reaction L-aspartyl-tRNA(Asn) + L-glutamine + ATP + H2O = L-asparaginyl-tRNA(Asn) + L-glutamate + ADP + phosphate + 2 H(+). Functionally, allows the formation of correctly charged Asn-tRNA(Asn) or Gln-tRNA(Gln) through the transamidation of misacylated Asp-tRNA(Asn) or Glu-tRNA(Gln) in organisms which lack either or both of asparaginyl-tRNA or glutaminyl-tRNA synthetases. The reaction takes place in the presence of glutamine and ATP through an activated phospho-Asp-tRNA(Asn) or phospho-Glu-tRNA(Gln). This Marinobacter nauticus (strain ATCC 700491 / DSM 11845 / VT8) (Marinobacter aquaeolei) protein is Aspartyl/glutamyl-tRNA(Asn/Gln) amidotransferase subunit C.